The primary structure comprises 511 residues: Histidine ammonia-lyase (511 aa).

A cross-link (5-imidazolinone (Ala-Gly)) is located at residues 144–146 (ASG). S145 carries the 2,3-didehydroalanine (Ser) modification.

The protein belongs to the PAL/histidase family. Contains an active site 4-methylidene-imidazol-5-one (MIO), which is formed autocatalytically by cyclization and dehydration of residues Ala-Ser-Gly.

Its subcellular location is the cytoplasm. The catalysed reaction is L-histidine = trans-urocanate + NH4(+). It participates in amino-acid degradation; L-histidine degradation into L-glutamate; N-formimidoyl-L-glutamate from L-histidine: step 1/3. The protein is Histidine ammonia-lyase of Halalkalibacterium halodurans (strain ATCC BAA-125 / DSM 18197 / FERM 7344 / JCM 9153 / C-125) (Bacillus halodurans).